We begin with the raw amino-acid sequence, 773 residues long: Probable C-mannosyltransferase DPY19L2 (773 aa).

Residues 1 to 45 (MVGPTRSKLREGSSDRPQSSCTGQARRRWSAATMEPQQERSAPQE) are disordered. Residues 1 to 122 (MVGPTRSKLR…ALQMHRFSHR (122 aa)) are Nuclear-facing. A helical membrane pass occupies residues 123–143 (TLFGLAIFVGILHWLHLITLF). The Perinuclear space segment spans residues 144-209 (ENDHHFSHLS…INTVKRFHLY (66 aa)). A helical transmembrane segment spans residues 210–230 (PEVVIAYWYRTIIGIMNLFGI). Over 231 to 256 (ETKTCWNVTRMEPLNEVQSCEGLGDP) the chain is Nuclear. A helical transmembrane segment spans residues 257–277 (ACFYIGVIFILNGLMMGLFFI). Over 278 to 311 (YSTYLSGSQLGGLITVACYFFNHGEATRVMWTPP) the chain is Perinuclear space. Residues 312–332 (LRESFSYPFLVLQMYILTIIL) traverse the membrane as a helical segment. Over 333 to 358 (RTSTVHKKHYMALCFSNVAFMLPWQF) the chain is Nuclear. Residues 359–379 (AQFILFTQIASLFPMYVVGYI) form a helical membrane-spanning segment. The Perinuclear space portion of the chain corresponds to 380 to 386 (EPSKFQK). The chain crosses the membrane as a helical span at residues 387–407 (IIYVNMSSVALCFILMFGNSM). The Nuclear portion of the chain corresponds to 408 to 437 (YLSSYYSSCLLVTWAIMQKKSKIQKLGGTE). Residues 438-458 (LQFWLIQGCFWWCGTIILKFL) traverse the membrane as a helical segment. Topologically, residues 459-507 (TSKICGVSDHIRLSDLIAARILRYTDFDTLIYTCAPEFDFMEQATPLRY) are perinuclear space. A helical membrane pass occupies residues 508 to 528 (IKTLLLPLILVITYLIFKKIV). Over 529–548 (RDIMCVLYTNTYVRKQLLDN) the chain is Nuclear. A helical transmembrane segment spans residues 549–569 (AELIFHTLQLLAFTGLAILIM). Topologically, residues 570-590 (RLKLFLTPHMCIMASLICSQR) are perinuclear space. A helical membrane pass occupies residues 591-611 (LFGWLFCRIHFENVVFGILTM). Topologically, residues 612–773 (MSIQGCANLH…NSMYRVLKIN (162 aa)) are nuclear.

It belongs to the dpy-19 family. As to quaternary structure, interacts with FAM209. As to expression, predominantly expressed in testis. Present in testis but absent from epididymal sperm (at protein level).

It is found in the nucleus inner membrane. Probable C-mannosyltransferase that mediates C-mannosylation of tryptophan residues on target proteins. In terms of biological role, required during spermatogenesis for sperm head elongation and acrosome formation. Also plays a role in acrosome attachment to the nuclear envelope. This chain is Probable C-mannosyltransferase DPY19L2 (Dpy19l2), found in Mus musculus (Mouse).